The following is a 567-amino-acid chain: Dihydrolipoyllysine-residue acetyltransferase component of pyruvate dehydrogenase complex (567 aa).

Lipoyl-binding domains are found at residues 2–75 (SKQI…LVLE) and 108–181 (IVEV…MRFE). Lys-41 and Lys-147 each carry N6-lipoyllysine. The span at 192–238 (SAPASTSAPQTAAPATTAQAPQAAAPDTTAQAPQAAAPDTTAQAAQS) shows a compositional bias: low complexity. The interval 192–249 (SAPASTSAPQTAAPATTAQAPQAAAPDTTAQAPQAAAPDTTAQAAQSNNNVSGLSQEQ) is disordered. Positions 239-249 (NNNVSGLSQEQ) are enriched in polar residues. A Peripheral subunit-binding (PSBD) domain is found at 258-295 (HATPVIRRLAREFGVNLDKVKGTGRKGRIVKEDIEAYV). Active-site residues include Cys-484, His-540, and Asp-544.

It belongs to the 2-oxoacid dehydrogenase family. As to quaternary structure, forms a 24-polypeptide structural core with octahedral symmetry. It depends on (R)-lipoate as a cofactor.

The catalysed reaction is N(6)-[(R)-dihydrolipoyl]-L-lysyl-[protein] + acetyl-CoA = N(6)-[(R)-S(8)-acetyldihydrolipoyl]-L-lysyl-[protein] + CoA. The pyruvate dehydrogenase complex catalyzes the overall conversion of pyruvate to acetyl-CoA and CO(2). It contains multiple copies of three enzymatic components: pyruvate dehydrogenase (E1), dihydrolipoamide acetyltransferase (E2) and lipoamide dehydrogenase (E3). The chain is Dihydrolipoyllysine-residue acetyltransferase component of pyruvate dehydrogenase complex (aceF) from Haemophilus influenzae (strain ATCC 51907 / DSM 11121 / KW20 / Rd).